The sequence spans 1215 residues: Kinesin-like protein KIN-7I (1215 aa).

Residues 3-327 (RIHVAVRARP…LQFASRALRV (325 aa)) form the Kinesin motor domain. Residue 79-86 (GQTNSGKT) coordinates ATP. Coiled-coil stretches lie at residues 333 to 414 (VNEI…IENL), 571 to 646 (ESEA…AAYE), 708 to 855 (IRDY…KRDS), and 894 to 979 (DMEA…KEDM).

The protein belongs to the TRAFAC class myosin-kinesin ATPase superfamily. Kinesin family. KIN-7 subfamily.

The chain is Kinesin-like protein KIN-7I from Oryza sativa subsp. japonica (Rice).